A 1114-amino-acid polypeptide reads, in one-letter code: Filamentous growth regulator 23 (1114 aa).

The first 21 residues, 1-21, serve as a signal peptide directing secretion; that stretch reads MFASYLLLVLWIIRLVPTTHA. Disordered stretches follow at residues 232 to 256 and 284 to 314; these read GSET…PSTT and SSSI…TSSS. A compositionally biased stretch (pro residues) spans 240–252; the sequence is TTAPKPVETPSPE. N-linked (GlcNAc...) asparagine glycosylation is found at Asn-382, Asn-397, Asn-475, Asn-490, Asn-506, Asn-539, Asn-565, Asn-591, Asn-637, Asn-687, and Asn-739. Positions 392 to 430 are disordered; it reads SETTTNESSSYTDEPSSSEEITNTYEPSSSTESSTTDQF. Residues 764 to 784 form a disordered region; the sequence is TSTLTSSHTSDNEKPASLSSS. Asn-831 carries N-linked (GlcNAc...) asparagine glycosylation. Composition is skewed to low complexity over residues 844–910 and 922–941; these read SASS…SSSS and SSSV…ESSS. Residues 844-963 are disordered; sequence SASSSYHSSE…ANENTSEITT (120 aa). Residues 942-963 are compositionally biased toward polar residues; sequence NGLVSTVTESSTANENTSEITT. N-linked (GlcNAc...) asparagine glycans are attached at residues Asn-957, Asn-966, and Asn-1070. A lipid anchor (GPI-anchor amidated asparagine) is attached at Asn-1089. Residues 1090 to 1114 constitute a propeptide, removed in mature form; sequence ANSLGLKNGDNSWIIGIMMIGLLMI.

Its subcellular location is the cell membrane. In terms of biological role, putative adhesin which may be involved in cell adhesion and virulence. Involved in the regulation of filamentous growth. This is Filamentous growth regulator 23 (FGR23) from Candida albicans (strain SC5314 / ATCC MYA-2876) (Yeast).